The following is a 310-amino-acid chain: Ribose-phosphate pyrophosphokinase (310 aa).

ATP is bound by residues 33–35 (DGE) and 92–93 (RQ). Mg(2+) contacts are provided by His127 and Asp166. Lys189 is an active-site residue. D-ribose 5-phosphate is bound by residues Arg191, Asp215, and 219-223 (DTAGT).

This sequence belongs to the ribose-phosphate pyrophosphokinase family. Class I subfamily. Homohexamer. Mg(2+) is required as a cofactor.

The protein localises to the cytoplasm. It catalyses the reaction D-ribose 5-phosphate + ATP = 5-phospho-alpha-D-ribose 1-diphosphate + AMP + H(+). It participates in metabolic intermediate biosynthesis; 5-phospho-alpha-D-ribose 1-diphosphate biosynthesis; 5-phospho-alpha-D-ribose 1-diphosphate from D-ribose 5-phosphate (route I): step 1/1. Functionally, involved in the biosynthesis of the central metabolite phospho-alpha-D-ribosyl-1-pyrophosphate (PRPP) via the transfer of pyrophosphoryl group from ATP to 1-hydroxyl of ribose-5-phosphate (Rib-5-P). The chain is Ribose-phosphate pyrophosphokinase from Bordetella parapertussis (strain 12822 / ATCC BAA-587 / NCTC 13253).